A 431-amino-acid polypeptide reads, in one-letter code: Neuronal pentraxin-2 (431 aa).

The signal sequence occupies residues 1-15 (MLALLAASVALAVAA). N-linked (GlcNAc...) asparagine glycans are attached at residues Asn-148 and Asn-189. One can recognise a Pentraxin (PTX) domain in the interval 223-424 (DAFKVSLPLR…GASKWPVETC (202 aa)). The cysteines at positions 253 and 313 are disulfide-linked. 5 residues coordinate Ca(2+): Asn-277, Glu-355, Gln-356, Asp-357, and Gln-367. Asn-393 is a glycosylation site (N-linked (GlcNAc...) asparagine).

As to quaternary structure, homooligomer or heterooligomer (probably pentamer) with neuronal pentraxin receptor (NPTXR). Requires Ca(2+) as cofactor. As to expression, brain, pancreas, liver, heart and skeletal muscle. Highest levels are seen in the testis.

The protein localises to the secreted. Its function is as follows. Likely to play role in the modification of cellular properties that underlie long-term plasticity. Binds to agar matrix in a calcium-dependent manner. The chain is Neuronal pentraxin-2 (NPTX2) from Homo sapiens (Human).